Reading from the N-terminus, the 130-residue chain is Protachykinin-1 (130 aa).

The first 19 residues, 1-19 (MKILVAVAVFFLVSTQLSA), serve as a signal peptide directing secretion. Positions 20-56 (EEIGANDDLNYWSDWSDSDQIKEALPEPFEHILQRIA) are excised as a propeptide. Methionine amide is present on residues methionine 68 and methionine 107.

It belongs to the tachykinin family. Post-translationally, the substance P form is cleaved at Pro-59 by the prolyl endopeptidase FAP (seprase) activity (in vitro). Substance P is also cleaved and degraded by Angiotensin-converting enzyme (ACE) and neprilysin (MME).

Its subcellular location is the secreted. In terms of biological role, tachykinins are active peptides which excite neurons, evoke behavioral responses, are potent vasodilators and secretagogues, and contract (directly or indirectly) many smooth muscles. In Mesocricetus auratus (Golden hamster), this protein is Protachykinin-1 (TAC1).